The sequence spans 327 residues: Flotillin-like protein FloA (327 aa).

2 consecutive transmembrane segments (helical) span residues 8–28 (VLLI…LVPI) and 29–49 (PLWI…LVGM).

Belongs to the flotillin-like FloA family. As to quaternary structure, homooligomerizes.

It localises to the cell membrane. Its subcellular location is the membrane raft. Found in functional membrane microdomains (FMM) that may be equivalent to eukaryotic membrane rafts. FMMs are highly dynamic and increase in number as cells age. Flotillins are thought to be important factors in membrane fluidity. This chain is Flotillin-like protein FloA, found in Exiguobacterium sibiricum (strain DSM 17290 / CCUG 55495 / CIP 109462 / JCM 13490 / 255-15).